The chain runs to 426 residues: Trigger factor 1 (426 aa).

A PPIase FKBP-type domain is found at 163-248 (QDTVNIDFAG…VNKLKRKEYA (86 aa)).

The protein belongs to the FKBP-type PPIase family. Tig subfamily.

It localises to the cytoplasm. The catalysed reaction is [protein]-peptidylproline (omega=180) = [protein]-peptidylproline (omega=0). In terms of biological role, involved in protein export. Acts as a chaperone by maintaining the newly synthesized protein in an open conformation. Functions as a peptidyl-prolyl cis-trans isomerase. The polypeptide is Trigger factor 1 (Desulfitobacterium hafniense (strain Y51)).